The sequence spans 1374 residues: Mitogen-activated protein kinase kinase kinase 5 (1374 aa).

Residues 68-87 (PAATSSSSATRGRGSSVGGG) are disordered. Low complexity predominate over residues 69–81 (AATSSSSATRGRG). An asymmetric dimethylarginine; by PRMT1 mark is found at R78 and R80. S83 bears the Phosphoserine; by PIM1 and PKB/AKT1 mark. An interaction with PPIA/CYPA region spans residues 649-1374 (MVNTITEEKG…AIIDFRNKQT (726 aa)). The Protein kinase domain occupies 680–938 (NGDRVVLGKG…ANDLLVDEFL (259 aa)). Residues 686–694 (LGKGTYGIV) and K709 each bind ATP. Y718 is subject to Phosphotyrosine. The active-site Proton acceptor is the D803. T813 carries the post-translational modification Phosphothreonine; by autocatalysis. At T838 the chain carries Phosphothreonine; by autocatalysis, MELK and MAP3K6. T842 carries the post-translational modification Phosphothreonine; by autocatalysis. The residue at position 958 (S958) is a Phosphoserine. Phosphoserine; by autocatalysis is present on S966. Phosphoserine occurs at positions 1029 and 1033. The disordered stretch occupies residues 1182–1209 (SESDTADQEDLDVEDDHEEQPSNQTVRR). Residues 1185-1199 (DTADQEDLDVEDDHE) show a composition bias toward acidic residues. A coiled-coil region spans residues 1245 to 1285 (LGRMKIETNRLLEELVRKEKELQALLHRAIEEKDQEIKHLK).

The protein belongs to the protein kinase superfamily. STE Ser/Thr protein kinase family. MAP kinase kinase kinase subfamily. As to quaternary structure, homodimer when inactive. Binds both upstream activators and downstream substrates in multimolecular complexes. Part of a cytoplasmic complex made of HIPK1, DAB2IP and MAP3K5 in response to TNF. This complex formation promotes MAP3K5-JNK activation and subsequent apoptosis. Interacts with SOCS1 which recognizes phosphorylation of Tyr-718 and induces MAP3K5/ASK1 degradation in endothelial cells. Interacts with the 14-3-3 family proteins such as YWHAB, YWHAE, YWHAQ, YWHAH, YWHAZ and SFN. Interacts with ARRB2, BIRC2, DAB2IP, IGF1R, MAP3K6/ASK2, PGAM5, PIM1, PPP5C, SOCS1, STUB1, TRAF2, TRAF6 and TXN. Interacts with ERN1 in a TRAF2-dependent manner. Interacts with calcineurin subunit PPP3R1. Interacts with PPM1L. Interacts (via N-terminus) with RAF1 and this interaction inhibits the proapoptotic function of MAP3K5. Interacts with DAB2IP (via N-terminus C2 domain); the interaction occurs in a TNF-alpha-dependent manner. Interacts with DUSP13A; may positively regulate apoptosis. Interacts with DAXX. Interacts with RC3H2. Interacts with PPIA/CYPA. Interacts with PRMT1; the interaction results in MAP3K5 methylation by PRMT1 which inhibits MAP3K5 activation. Interacts with TRAF2; the interaction is inhibited by PRMT1. Interacts with TRIM48. In terms of assembly, (Microbial infection) Interacts with HIV-1 Nef; this interaction inhibits MAP3K5 signaling. The cofactor is Mg(2+). Post-translationally, phosphorylated at Thr-838 through autophosphorylation and by MAP3K6/ASK2 which leads to activation. Thr-838 is dephosphorylated by PPP5C. Ser-83 and Ser-1033 are inactivating phosphorylation sites, the former of which is phosphorylated by AKT1. Phosphorylated at Ser-966 which induces association of MAP3K5/ASK1 with the 14-3-3 family proteins and suppresses MAP3K5/ASK1 activity. Calcineurin (CN) dephosphorylates this site. Also dephosphorylated and activated by PGAM5. Phosphorylation at Ser-966 in response to oxidative stress is negatively regulated by PPIA/CYPA. In terms of processing, ubiquitinated. Tumor necrosis factor (TNF) induces TNFR2-dependent ubiquitination, leading to proteasomal degradation. Ubiquitinated by RC3H2 in a TRIM48-dependent manner. Methylation at Arg-78 and Arg-80 by PRMT1 promotes association of MAP3K5 with thioredoxin and negatively regulates MAP3K5 association with TRAF2, inhibiting MAP3K5 activation. Methylation is blocked by ubiquitination of PRMT1 by TRIM48. Abundantly expressed in heart and pancreas.

It localises to the cytoplasm. It is found in the endoplasmic reticulum. The enzyme catalyses L-seryl-[protein] + ATP = O-phospho-L-seryl-[protein] + ADP + H(+). The catalysed reaction is L-threonyl-[protein] + ATP = O-phospho-L-threonyl-[protein] + ADP + H(+). With respect to regulation, activated by various stressors, including oxidative stress, endoplasmic reticulum stress, and calcium overload, as well as by receptor-mediated inflammatory signals, such as the tumor necrosis factor (TNF) and lipopolysaccharide (LPS). Homophilic association of MAP3K5/ASK1 through the C-terminal coiled-coil domains and the heteromeric complex formation of MAP3K5/ASK1 with the reduced form of thioredoxin (TXN), constitutes an inactive form of the kinase. Upon ROS-induced dissociation of TXN from MAP3K5/ASK1, TRAF2 and TRAF6 are reciprocally recruited to MAP3K5/ASK1 and form the active MAP3K5/ASK1 signalosome, in which TRAF2 and TRAF6 appear to facilitate the active configuration of MAP3K5/ASK1. MAP3K5/ASK1 activity is also regulated through several phosphorylation and dephosphorylation events. Thr-838 is an activating phosphorylation site that is autophosphorylated and phosphorylated by MAP3K6/ASK2 and dephosphorylated by PPP5C. Ser-83 and Ser-1033 are inactivating phosphorylation sites, the former of which is phosphorylated by AKT1. Phosphorylation of Ser-966 induces association of MAP3K5/ASK1 with the 14-3-3 family proteins, which suppresses MAP3K5/ASK1 activity. Calcium/calmodulin-activated protein phosphatase calcineurin (PPP3CA) has been shown to directly dephosphorylate this site. SOCS1 binds to ASK1 by recognizing phosphorylation of Tyr-718 and induces MAP3K5/ASK1 degradation in endothelial cells. Also dephosphorylated and activated by PGAM5. Contains an N-terminal autoinhibitory domain. Once activated targeted for proteasomal degradation by RC3H2-mediated ubiquitination. Functionally, serine/threonine kinase which acts as an essential component of the MAP kinase signal transduction pathway. Plays an important role in the cascades of cellular responses evoked by changes in the environment. Mediates signaling for determination of cell fate such as differentiation and survival. Plays a crucial role in the apoptosis signal transduction pathway through mitochondria-dependent caspase activation. MAP3K5/ASK1 is required for the innate immune response, which is essential for host defense against a wide range of pathogens. Mediates signal transduction of various stressors like oxidative stress as well as by receptor-mediated inflammatory signals, such as the tumor necrosis factor (TNF) or lipopolysaccharide (LPS). Once activated, acts as an upstream activator of the MKK/JNK signal transduction cascade and the p38 MAPK signal transduction cascade through the phosphorylation and activation of several MAP kinase kinases like MAP2K4/SEK1, MAP2K3/MKK3, MAP2K6/MKK6 and MAP2K7/MKK7. These MAP2Ks in turn activate p38 MAPKs and c-jun N-terminal kinases (JNKs). Both p38 MAPK and JNKs control the transcription factors activator protein-1 (AP-1). This chain is Mitogen-activated protein kinase kinase kinase 5 (MAP3K5), found in Homo sapiens (Human).